Consider the following 298-residue polypeptide: uncharacterized protein (298 aa).

10 helical membrane passes run 5-25 (ILFG…MSAF), 36-56 (MENV…IYPF), 76-96 (VVVG…ISLA), 97-117 (TATA…PLLL), 124-144 (SALI…DPSV), 147-167 (VGLV…LAYI), 181-201 (VILA…FIDI), 216-236 (ILWI…LTYA), 244-264 (IIAP…LYLG), and 272-292 (SSLG…PALL). The 125-residue stretch at 17-141 (LCFGIMSAFV…GLVGVVLISD (125 aa)) folds into the EamA 1 domain. One can recognise an EamA 2 domain in the interval 183-288 (LAFAFGMSLL…ILCSGLLIAL (106 aa)).

Belongs to the EamA transporter family.

It localises to the cell membrane. This is an uncharacterized protein from Helicobacter pylori (strain J99 / ATCC 700824) (Campylobacter pylori J99).